A 658-amino-acid chain; its full sequence is Integrator complex subunit 9 (658 aa).

Lys2 and Phe19 together coordinate 1D-myo-inositol hexakisphosphate. Residue Lys58 forms a Glycyl lysine isopeptide (Lys-Gly) (interchain with G-Cter in SUMO2) linkage. Residues Lys510 and Arg511 each contribute to the 1D-myo-inositol hexakisphosphate site. The tract at residues 548–574 (DNKHLLQPPPRPAQPTSGKKRKRVSDD) is disordered. The short motif at 566–570 (KKRKR) is the Nuclear localization signal element.

This sequence belongs to the metallo-beta-lactamase superfamily. RNA-metabolizing metallo-beta-lactamase-like family. INTS9 subfamily. Component of the Integrator complex, composed of core subunits INTS1, INTS2, INTS3, INTS4, INTS5, INTS6, INTS7, INTS8, INTS9/RC74, INTS10, INTS11/CPSF3L, INTS12, INTS13, INTS14 and INTS15. The core complex associates with protein phosphatase 2A subunits PPP2CA and PPP2R1A, to form the Integrator-PP2A (INTAC) complex. INTS9 is part of the RNA endonuclease subcomplex, composed of INTS4, INTS9, INTS11 and inositol hexakisphosphate (InsP6). Interacts with WDR73; interaction is required for the assembly of the RNA endonuclease subcomplex in the cytoplasm. Interacts with BRAT1; interaction is required for the assembly of the RNA endonuclease subcomplex. Interacts with ESRRB, ESRRB is not a core component of the Integrator complex and this association is a bridge for the interaction with the multiprotein complex Integrator; attracts the transcriptional machinery.

It localises to the nucleus. Its subcellular location is the cytoplasm. Functionally, component of the integrator complex, a multiprotein complex that terminates RNA polymerase II (Pol II) transcription in the promoter-proximal region of genes. The integrator complex provides a quality checkpoint during transcription elongation by driving premature transcription termination of transcripts that are unfavorably configured for transcriptional elongation: the complex terminates transcription by (1) catalyzing dephosphorylation of the C-terminal domain (CTD) of Pol II subunit POLR2A/RPB1 and SUPT5H/SPT5, (2) degrading the exiting nascent RNA transcript via endonuclease activity and (3) promoting the release of Pol II from bound DNA. The integrator complex is also involved in terminating the synthesis of non-coding Pol II transcripts, such as enhancer RNAs (eRNAs), small nuclear RNAs (snRNAs), telomerase RNAs and long non-coding RNAs (lncRNAs). Mediates recruitment of cytoplasmic dynein to the nuclear envelope, probably as component of the integrator complex. The chain is Integrator complex subunit 9 from Homo sapiens (Human).